Here is a 305-residue protein sequence, read N- to C-terminus: Tetraspanin-12 (305 aa).

Residues 1–12 (MAREDSVKCLRC) are Cytoplasmic-facing. 2 S-palmitoyl cysteine lipidation sites follow: Cys-9 and Cys-12. A helical membrane pass occupies residues 13–33 (LLYALNLLFWLMSISVLAVSA). Residues 34 to 59 (WMRDYLNNVLTLTAETRVEEAVILTY) lie on the Extracellular side of the membrane. The chain crosses the membrane as a helical span at residues 60–80 (FPVVHPVMIAVCCFLIIVGML). Cys-83 is lipidated: S-palmitoyl cysteine. Residues 90 to 110 (LLLLAWYFGTLLVIFCVELAC) form a helical membrane-spanning segment. Residues 111 to 224 (GVWTYEQEVM…RGTKQLQVLR (114 aa)) are Extracellular-facing. The chain crosses the membrane as a helical span at residues 225–245 (FLGISIGVTQILAMILTITLL). Residues 246–305 (WALYYDRREPGTDQMLSLKNDASQHLSCHSVELLKPSLSRIFEHTSMANSFNTHFEMEEL) lie on the Cytoplasmic side of the membrane.

This sequence belongs to the tetraspanin (TM4SF) family. In terms of assembly, component of a complex, at least composed of TSPAN12, FZD4 and norrin (NDP). Interacts (when palmitoylated) with ADAM10. Interacts with MMP14/MT1-MMP. In terms of processing, palmitoylated; required for interaction with ADAM10. The precise position of palmitoylated residues is unclear and occurs either on Cys-9, Cys-12 and/or Cys-83.

Its subcellular location is the cell membrane. In terms of biological role, regulator of cell surface receptor signal transduction. Plays a central role in retinal vascularization by regulating norrin (NDP) signal transduction. Acts in concert with norrin (NDP) to promote FZD4 multimerization and subsequent activation of FZD4, leading to promote accumulation of beta-catenin (CTNNB1) and stimulate LEF/TCF-mediated transcriptional programs. Suprisingly, it only activates the norrin (NDP)-dependent activation of FZD4, while it does not activate the Wnt-dependent activation of FZD4, suggesting the existence of a Wnt-independent signaling that also promote accumulation the beta-catenin (CTNNB1). Acts as a regulator of membrane proteinases such as ADAM10 and MMP14/MT1-MMP. Activates ADAM10-dependent cleavage activity of amyloid precursor protein (APP). Activates MMP14/MT1-MMP-dependent cleavage activity. The chain is Tetraspanin-12 (Tspan12) from Rattus norvegicus (Rat).